We begin with the raw amino-acid sequence, 312 residues long: 2-aminophenol 1,6-dioxygenase subunit beta (312 aa).

The Fe cation site is built by histidine 13, histidine 62, and glutamate 251.

It belongs to the LigB/MhpB extradiol dioxygenase family. In terms of assembly, the APD complex is a heterotetramer of 2 alpha (CnbCa) and 2 beta (CnbCb) subunits. The cofactor is Fe(2+).

The catalysed reaction is 2-aminophenol + O2 = 2-aminomuconate 6-semialdehyde. It carries out the reaction 2-amino-5-chlorophenol + O2 = 2-amino-5-chloromuconate 6-semialdehyde. It participates in xenobiotic degradation; nitrobenzene degradation. The protein operates within xenobiotic degradation; 4-chloronitrobenzene degradation. Complete loss of activity in the presence of Ni(2+), Co(2+), Cd(2+), Zn(2+) and hydrogen peroxide, however activity with hydrogen peroxide partially restored upon addition of excess ascorbate. Partially inhibited by Fe(2+), Mg(2+), Ca(2+), Mn(2+), Cu(2+) and also by EDTA, at 2 mM concentration. Total activity inhibited in the presence of catechol or 4-nitrocatechol but completely restored after removal of catechol and addition of 2 mM Fe(2+) and 5 mM ascorbate. Component of the 2-aminophenol 1,6-dioxygenase (APD) complex that catalyzes the ring fission of 2-aminophenol to produce 2-aminomuconic semialdehyde. CnbCb seems to be the catalytic subunit of the complex. Also active on other substrates such as 2-amino-5-chlorophenol (68% activity), protocatechuate (33% activity) and catechol (5% activity). Both 2-aminophenol and 2-amino-5-cholorophenol are likely native substrates for this dioxygenase which is involved in the reductive degradation pathway of both nitrobenzene (NB) and 4-chloronitrobenzene (4-CNB), allowing C.testosteroni strain CNB-1 to grow on these compounds as sole source of carbon, nitrogen, and energy. The protein is 2-aminophenol 1,6-dioxygenase subunit beta of Comamonas testosteroni (Pseudomonas testosteroni).